The primary structure comprises 376 residues: Chaperone protein DnaJ (376 aa).

A J domain is found at 5–70 (DYYEVLGVGR…DKKAAYDQFG (66 aa)). Residues 132–210 (GLTKELRIPT…CHGEGRVEKS (79 aa)) form a CR-type zinc finger. 8 residues coordinate Zn(2+): cysteine 145, cysteine 148, cysteine 162, cysteine 165, cysteine 184, cysteine 187, cysteine 198, and cysteine 201. 4 CXXCXGXG motif repeats span residues 145-152 (CDLCDGSG), 162-169 (CGTCHGQG), 184-191 (CPTCHGRG), and 198-205 (CGKCHGEG).

It belongs to the DnaJ family. As to quaternary structure, homodimer. Requires Zn(2+) as cofactor.

It is found in the cytoplasm. In terms of biological role, participates actively in the response to hyperosmotic and heat shock by preventing the aggregation of stress-denatured proteins and by disaggregating proteins, also in an autonomous, DnaK-independent fashion. Unfolded proteins bind initially to DnaJ; upon interaction with the DnaJ-bound protein, DnaK hydrolyzes its bound ATP, resulting in the formation of a stable complex. GrpE releases ADP from DnaK; ATP binding to DnaK triggers the release of the substrate protein, thus completing the reaction cycle. Several rounds of ATP-dependent interactions between DnaJ, DnaK and GrpE are required for fully efficient folding. Also involved, together with DnaK and GrpE, in the DNA replication of plasmids through activation of initiation proteins. This is Chaperone protein DnaJ from Shewanella loihica (strain ATCC BAA-1088 / PV-4).